The following is a 150-amino-acid chain: UPF0756 membrane protein STH2648 (150 aa).

4 consecutive transmembrane segments (helical) span residues 13–33 (ALGVVARNALIVTAAGVVLIL), 52–72 (AGLIFLLIAVLVPFATGEVGW), 85–105 (LAAILGGIIAAVLSGYGVTLL), and 111–131 (VIVGMVVGTILGVVLFKGIPV).

Belongs to the UPF0756 family.

The protein resides in the cell membrane. The sequence is that of UPF0756 membrane protein STH2648 from Symbiobacterium thermophilum (strain DSM 24528 / JCM 14929 / IAM 14863 / T).